The sequence spans 177 residues: O-acetyl-ADP-ribose deacetylase (177 aa).

The region spanning Met-1–Gly-175 is the Macro domain. Substrate contacts are provided by residues Asp-11–Ile-12, Asn-25, Gly-33–Asp-35, and Ser-122–Tyr-126. The Proton acceptor role is filled by Asp-35.

It belongs to the MacroD-type family. YmdB subfamily. As to quaternary structure, homodimer. Interacts with RNase III.

It carries out the reaction 3''-O-acetyl-ADP-D-ribose + H2O = ADP-D-ribose + acetate + H(+). The catalysed reaction is 2''-O-acetyl-ADP-D-ribose + H2O = ADP-D-ribose + acetate + H(+). Deacetylates O-acetyl-ADP ribose to yield ADP-ribose and free acetate. Down-regulates ribonuclease 3 (RNase III) activity. Acts by interacting directly with the region of the ribonuclease that is required for dimerization/activation. This chain is O-acetyl-ADP-ribose deacetylase, found in Citrobacter koseri (strain ATCC BAA-895 / CDC 4225-83 / SGSC4696).